A 448-amino-acid polypeptide reads, in one-letter code: Phosphoglucosamine mutase (448 aa).

Serine 104 serves as the catalytic Phosphoserine intermediate. Mg(2+)-binding residues include serine 104, aspartate 241, aspartate 243, and aspartate 245. Serine 104 is modified (phosphoserine).

The protein belongs to the phosphohexose mutase family. It depends on Mg(2+) as a cofactor. Post-translationally, activated by phosphorylation.

The enzyme catalyses alpha-D-glucosamine 1-phosphate = D-glucosamine 6-phosphate. Catalyzes the conversion of glucosamine-6-phosphate to glucosamine-1-phosphate. In Nocardioides sp. (strain ATCC BAA-499 / JS614), this protein is Phosphoglucosamine mutase.